The chain runs to 311 residues: UPF0324 membrane protein VV1_3166 (311 aa).

A run of 10 helical transmembrane segments spans residues 8–28, 51–71, 74–94, 106–126, 133–153, 165–185, 197–217, 228–248, 256–276, and 289–309; these read FIFALLLCLSPWVSSPTALVL, LLSYSIIGLGFGIQFQQAIAV, DGIGLIVVTIAGTLLLGFLVA, LISAGTAICGGSAIAAVAPAI, IALALATVFVLNSLALFIFPV, FGTWAAIAIHDTSSVVGAASA, LKLARALWIIPVALLSAILFA, LVLPYFIFWYCAAIAFSDLFP, GIFSVAKQALVVCLFLIGCSI, and LIFGLSLWVVISTTSLSWLLL.

This sequence belongs to the UPF0324 family.

It is found in the cell membrane. This is UPF0324 membrane protein VV1_3166 from Vibrio vulnificus (strain CMCP6).